The sequence spans 118 residues: Small ribosomal subunit protein uS13 (118 aa).

Residues 94-118 (GLPVRGQRTKTNARTRKGPRKPIRK) are disordered.

This sequence belongs to the universal ribosomal protein uS13 family. Part of the 30S ribosomal subunit. Forms a loose heterodimer with protein S19. Forms two bridges to the 50S subunit in the 70S ribosome.

Its function is as follows. Located at the top of the head of the 30S subunit, it contacts several helices of the 16S rRNA. In the 70S ribosome it contacts the 23S rRNA (bridge B1a) and protein L5 of the 50S subunit (bridge B1b), connecting the 2 subunits; these bridges are implicated in subunit movement. Contacts the tRNAs in the A and P-sites. This Marinobacter nauticus (strain ATCC 700491 / DSM 11845 / VT8) (Marinobacter aquaeolei) protein is Small ribosomal subunit protein uS13.